Reading from the N-terminus, the 153-residue chain is Flagellar assembly factor FliW (153 aa).

Belongs to the FliW family. Interacts with translational regulator CsrA and flagellin(s).

The protein localises to the cytoplasm. In terms of biological role, acts as an anti-CsrA protein, binds CsrA and prevents it from repressing translation of its target genes, one of which is flagellin. Binds to flagellin and participates in the assembly of the flagellum. The sequence is that of Flagellar assembly factor FliW from Heliobacterium modesticaldum (strain ATCC 51547 / Ice1).